A 240-amino-acid chain; its full sequence is Small ribosomal subunit protein uS3 (240 aa).

The KH type-2 domain occupies 39–108 (LRKFLKKKLY…ELILNIKEER (70 aa)). A compositionally biased stretch (basic and acidic residues) spans 213 to 224 (MNSDDTATPERK). Residues 213–240 (MNSDDTATPERKAPRRRKGRRNVNAKKN) form a disordered region. The segment covering 225 to 240 (APRRRKGRRNVNAKKN) has biased composition (basic residues).

This sequence belongs to the universal ribosomal protein uS3 family. In terms of assembly, part of the 30S ribosomal subunit. Forms a tight complex with proteins S10 and S14.

Functionally, binds the lower part of the 30S subunit head. Binds mRNA in the 70S ribosome, positioning it for translation. This is Small ribosomal subunit protein uS3 from Nautilia profundicola (strain ATCC BAA-1463 / DSM 18972 / AmH).